The primary structure comprises 1086 residues: Lon protease homolog, mitochondrial (1086 aa).

The transit peptide at 1–55 (MLRTSCTSSLRRVVGKYVVSPLVASQIRFATSSVRSQPYLLNSELTELPAQFKRY) directs the protein to the mitochondrion. The disordered stretch occupies residues 61–176 (TEKPEGDVPE…EPNEIVTNAG (116 aa)). The segment covering 69 to 83 (PESGPEPSGESGISE) has biased composition (low complexity). The span at 85 to 120 (SNVENDKHDGNDEIKPEAEKNEKDEIEKPEIDKDAI) shows a compositional bias: basic and acidic residues. Over residues 124-163 (DGVSESSVENVSGSSSAAGGASAPPSGNSNNNNNNNNNNN) the composition is skewed to low complexity. In terms of domain architecture, Lon N-terminal spans 183 to 406 (LLAIPMKDRP…KALELLKVEL (224 aa)). ATP is bound at residue 558–565 (GPPGTGKT). 2 stretches are compositionally biased toward basic and acidic residues: residues 767–782 (EARE…EAKS) and 815–827 (KVDE…SEEL). Disordered stretches follow at residues 767 to 788 (EARE…ITGS) and 800 to 835 (KAQS…EEEE). In terms of domain architecture, Lon proteolytic spans 871 to 1059 (IPPPGVATGL…QDVFDEIFPN (189 aa)). Active-site residues include serine 965 and lysine 1008.

It belongs to the peptidase S16 family. Homohexamer or homoheptamer. Organized in a ring with a central cavity.

The protein localises to the mitochondrion matrix. It catalyses the reaction Hydrolysis of proteins in presence of ATP.. Its function is as follows. ATP-dependent serine protease that mediates the selective degradation of misfolded, unassembled or oxidatively damaged polypeptides as well as certain short-lived regulatory proteins in the mitochondrial matrix. May also have a chaperone function in the assembly of inner membrane protein complexes. Participates in the regulation of mitochondrial gene expression and in the maintenance of the integrity of the mitochondrial genome. Binds to mitochondrial DNA in a site-specific manner. This chain is Lon protease homolog, mitochondrial, found in Scheffersomyces stipitis (strain ATCC 58785 / CBS 6054 / NBRC 10063 / NRRL Y-11545) (Yeast).